The chain runs to 649 residues: Endoglucanase D (649 aa).

The N-terminal stretch at 1–41 (MSRMTLKSSMKKRVLSLLIAVVFLSLTGVFPSGLIETKVSA) is a signal peptide. Catalysis depends on Asp201, which acts as the Nucleophile. Active-site residues include His516 and Asp546. The active-site Proton donor is Glu555. The region spanning 579–649 (NEVLYGDVND…LIRVIEKLPI (71 aa)) is the Dockerin domain.

This sequence belongs to the glycosyl hydrolase 9 (cellulase E) family. It depends on Ca(2+) as a cofactor.

The enzyme catalyses Endohydrolysis of (1-&gt;4)-beta-D-glucosidic linkages in cellulose, lichenin and cereal beta-D-glucans.. This enzyme catalyzes the endohydrolysis of 1,4-beta-glucosidic linkages in cellulose, lichenin and cereal beta-D-glucans. In Acetivibrio thermocellus (strain ATCC 27405 / DSM 1237 / JCM 9322 / NBRC 103400 / NCIMB 10682 / NRRL B-4536 / VPI 7372) (Clostridium thermocellum), this protein is Endoglucanase D (celD).